A 365-amino-acid chain; its full sequence is Carboxynorspermidine/carboxyspermidine decarboxylase (365 aa).

Lys-37 is modified (N6-(pyridoxal phosphate)lysine). The substrate site is built by Glu-233 and Asp-269.

The protein belongs to the Orn/Lys/Arg decarboxylase class-II family. NspC subfamily. Homodimer. Pyridoxal 5'-phosphate serves as cofactor.

Its subcellular location is the cytoplasm. It catalyses the reaction carboxynorspermidine + H(+) = norspermidine + CO2. The catalysed reaction is carboxyspermidine + H(+) = spermidine + CO2. In terms of biological role, catalyzes the decarboxylation of carboxynorspermidine and carboxyspermidine. The protein is Carboxynorspermidine/carboxyspermidine decarboxylase of Herminiimonas arsenicoxydans.